The chain runs to 322 residues: N-acetyl-gamma-glutamyl-phosphate reductase 2 (322 aa).

Cys-117 is an active-site residue.

Belongs to the NAGSA dehydrogenase family. Type 2 subfamily.

The protein resides in the cytoplasm. It carries out the reaction N-acetyl-L-glutamate 5-semialdehyde + phosphate + NADP(+) = N-acetyl-L-glutamyl 5-phosphate + NADPH + H(+). The protein operates within amino-acid biosynthesis; L-arginine biosynthesis; N(2)-acetyl-L-ornithine from L-glutamate: step 3/4. Its function is as follows. Catalyzes the NADPH-dependent reduction of N-acetyl-5-glutamyl phosphate to yield N-acetyl-L-glutamate 5-semialdehyde. This Nostoc sp. (strain PCC 7120 / SAG 25.82 / UTEX 2576) protein is N-acetyl-gamma-glutamyl-phosphate reductase 2.